We begin with the raw amino-acid sequence, 162 residues long: Phospholipase A and acyltransferase 3 (162 aa).

Residues 1 to 133 lie on the Cytoplasmic side of the membrane; the sequence is MLAPIPEPKP…VPRSDQVRDA (133 aa). The region spanning 13-129 is the LRAT domain; that stretch reads LIEIFRPMYR…LRYGVPRSDQ (117 aa). Active-site residues include H23 and H35. The Acyl-thioester intermediate role is filled by C113. A helical transmembrane segment spans residues 134–154; sequence VKAVGIAGVGLAALGLVGVML. Over 155 to 162 the chain is Lumenal; that stretch reads SRNKKQKQ.

It belongs to the H-rev107 family. In terms of assembly, interacts with PPP2R1A; this interaction might decrease PP2A activity. As to expression, ubiquitously expressed in normal tissues but down-regulated in primary carcinomas or in many cell lines derived from tumors. Highly expressed in white adipose tissue and in adipocytes. Expressed at lower levels in brown adipose tissue.

The protein resides in the cell membrane. It is found in the cytoplasm. It localises to the cytosol. Its subcellular location is the perinuclear region. The protein localises to the peroxisome membrane. The protein resides in the mitochondrion membrane. It is found in the nucleus envelope. It localises to the lysosome membrane. Its subcellular location is the endoplasmic reticulum membrane. The catalysed reaction is a 1,2-diacyl-sn-glycero-3-phosphocholine + H2O = a 1-acyl-sn-glycero-3-phosphocholine + a fatty acid + H(+). It carries out the reaction a 1,2-diacyl-sn-glycero-3-phosphocholine + H2O = a 2-acyl-sn-glycero-3-phosphocholine + a fatty acid + H(+). It catalyses the reaction 1,2-dihexadecanoyl-sn-glycero-3-phosphocholine + H2O = 1-hexadecanoyl-sn-glycero-3-phosphocholine + hexadecanoate + H(+). The enzyme catalyses 1,2-dihexadecanoyl-sn-glycero-3-phosphocholine + H2O = 2-hexadecanoyl-sn-glycero-3-phosphocholine + hexadecanoate + H(+). The catalysed reaction is 1-hexadecanoyl-2-(9Z-octadecenoyl)-sn-glycero-3-phosphocholine + H2O = 2-(9Z-octadecenoyl)-sn-glycero-3-phosphocholine + hexadecanoate + H(+). It carries out the reaction 1-hexadecanoyl-2-(9Z-octadecenoyl)-sn-glycero-3-phosphocholine + H2O = 1-hexadecanoyl-sn-glycero-3-phosphocholine + (9Z)-octadecenoate + H(+). It catalyses the reaction 1-hexadecanoyl-2-(5Z,8Z,11Z,14Z-eicosatetraenoyl)-sn-glycero-3-phosphocholine + H2O = 1-hexadecanoyl-sn-glycero-3-phosphocholine + (5Z,8Z,11Z,14Z)-eicosatetraenoate + H(+). The enzyme catalyses 1-hexadecanoyl-2-(5Z,8Z,11Z,14Z-eicosatetraenoyl)-sn-glycero-3-phosphocholine + H2O = 2-(5Z,8Z,11Z,14Z)-eicosatetraenoyl-sn-glycero-3-phosphocholine + hexadecanoate + H(+). The catalysed reaction is 1-hexadecanoyl-2-(9Z,12Z-octadecadienoyl)-sn-glycero-3-phosphoethanolamine + H2O = 1-hexadecanoyl-sn-glycero-3-phosphoethanolamine + (9Z,12Z)-octadecadienoate + H(+). It carries out the reaction 1-hexadecanoyl-2-(9Z,12Z-octadecadienoyl)-sn-glycero-3-phosphoethanolamine + H2O = 2-(9Z,12Z)-octadecadienoyl-sn-glycero-3-phosphoethanolamine + hexadecanoate + H(+). It catalyses the reaction 1-hexadecanoyl-2-(5Z,8Z,11Z,14Z-eicosatetraenoyl)-sn-glycero-3-phosphoethanolamine + H2O = 1-hexadecanoyl-sn-glycero-3-phosphoethanolamine + (5Z,8Z,11Z,14Z)-eicosatetraenoate + H(+). The enzyme catalyses 1-hexadecanoyl-2-(5Z,8Z,11Z,14Z-eicosatetraenoyl)-sn-glycero-3-phosphoethanolamine + H2O = 2-(5Z,8Z,11Z,14Z)-eicosatetraenoyl-sn-glycero-3-phosphoethanolamine + hexadecanoate + H(+). The catalysed reaction is 1-hexanoyl-2-acyl-sn-glycero-3-phosphocholine + H2O = hexanoate + a 2-acyl-sn-glycero-3-phosphocholine + H(+). It carries out the reaction 1-hexanoyl-2-acyl-sn-glycero-3-phosphocholine + H2O = 1-hexanoyl-sn-glycero-3-phosphocholine + a fatty acid + H(+). It catalyses the reaction 1,2-diheptadecanoyl-sn-glycero-3-phosphoethanolamine + 1-(9Z-octadecenoyl)-2-hexadecanoyl-sn-glycero-3-phosphocholine = 1,2-diheptadecanoyl-sn-glycero-3-phospho-N-hexadecanoyl-ethanolamine + 1-(9Z-octadecenoyl)-sn-glycero-3-phosphocholine + H(+). The enzyme catalyses 1,2-diheptadecanoyl-sn-glycero-3-phosphoethanolamine + 1-(9Z-octadecenoyl)-2-hexadecanoyl-sn-glycero-3-phosphocholine = 1,2-diheptadecanoyl-sn-glycero-3-phospho-N-(9Z-octadecenoyl)-ethanolamine + 2-hexadecanoyl-sn-glycero-3-phosphocholine + H(+). The catalysed reaction is 1,2-dihexanoyl-sn-glycero-3-phosphoethanolamine + 2-heptanoyl-sn-glycero-3-phosphocholine = hexanoyl-sn-glycero-3-phosphoethanolamine + 1-hexanoyl-2-heptanoyl-sn-glycero-3-phosphocholine. It carries out the reaction 1-hexadecanoyl-2-octadecanoyl-sn-glycero-3-phosphocholine + H2O = octadecanoate + 1-hexadecanoyl-sn-glycero-3-phosphocholine + H(+). It catalyses the reaction 1-hexadecanoyl-2-octadecanoyl-sn-glycero-3-phosphocholine + H2O = 2-octadecanoyl-sn-glycero-3-phosphocholine + hexadecanoate + H(+). The enzyme catalyses 1-octadecanoyl-2-hexadecanoyl-sn-glycero-3-phosphocholine + H2O = 1-octadecanoyl-sn-glycero-3-phosphocholine + hexadecanoate + H(+). The catalysed reaction is 1-octadecanoyl-2-hexadecanoyl-sn-glycero-3-phosphocholine + H2O = 2-hexadecanoyl-sn-glycero-3-phosphocholine + octadecanoate + H(+). It carries out the reaction 1-hexadecanoyl-2-(9Z,12Z-octadecadienoyl)-sn-glycero-3-phosphocholine + H2O = (9Z,12Z)-octadecadienoate + 1-hexadecanoyl-sn-glycero-3-phosphocholine + H(+). It catalyses the reaction 1-hexadecanoyl-2-(9Z,12Z-octadecadienoyl)-sn-glycero-3-phosphocholine + H2O = 2-(9Z,12Z-octadecadienoyl)-sn-glycero-3-phosphocholine + hexadecanoate + H(+). The enzyme catalyses 1,2-di-(9Z-octadecenoyl)-sn-glycero-3-phosphocholine + H2O = 2-(9Z-octadecenoyl)-sn-glycero-3-phosphocholine + (9Z)-octadecenoate + H(+). The catalysed reaction is 1,2-dihexadecanoyl-sn-glycero-3-phosphocholine + H2O = hexadecanoyl-sn-glycero-3-phosphocholine + hexadecanoate + H(+). It carries out the reaction 1,2-di-(9Z-octadecenoyl)-sn-glycero-3-phosphocholine + H2O = 1-(9Z-octadecenoyl)-sn-glycero-3-phosphocholine + (9Z)-octadecenoate + H(+). It catalyses the reaction 1,2-di-(9Z-octadecenoyl)-sn-glycero-3-phosphoethanolamine + 1,2-dihexadecanoyl-sn-glycero-3-phosphocholine = hexadecanoyl-sn-glycero-3-phosphocholine + N-hexadecanoyl-1,2-di-(9Z-octadecenoyl)-sn-glycero-3-phosphoethanolamine + H(+). The enzyme catalyses 1,2-di-(9Z,12Z-octadecadienoyl)-sn-glycero-3-phosphocholine + H2O = 1-(9Z,12Z)-octadecadienoyl-sn-glycero-3-phosphocholine + (9Z,12Z)-octadecadienoate + H(+). In terms of biological role, exhibits both phospholipase A1/2 and acyltransferase activities. Shows phospholipase A1 (PLA1) and A2 (PLA2), catalyzing the calcium-independent release of fatty acids from the sn-1 or sn-2 position of glycerophospholipids. For most substrates, PLA1 activity is much higher than PLA2 activity. Shows O-acyltransferase activity, catalyzing the transfer of a fatty acyl group from glycerophospholipid to the hydroxyl group of lysophospholipid. Shows N-acyltransferase activity,catalyzing the calcium-independent transfer of a fatty acyl group at the sn-1 position of phosphatidylcholine (PC) and other glycerophospholipids to the primary amine of phosphatidylethanolamine (PE), forming N-acylphosphatidylethanolamine (NAPE), which serves as precursor for N-acylethanolamines (NAEs). Exhibits high N-acyltransferase activity and low phospholipase A1/2 activity. Required for complete organelle rupture and degradation that occur during eye lens terminal differentiation, when fiber cells that compose the lens degrade all membrane-bound organelles in order to provide lens with transparency to allow the passage of light. Organelle membrane degradation is probably catalyzed by the phospholipase activity. Its function is as follows. (Microbial infection) Acts as a host factor for picornaviruses: required during early infection to promote viral genome release into the cytoplasm. This chain is Phospholipase A and acyltransferase 3, found in Mus musculus (Mouse).